Consider the following 484-residue polypeptide: MTKSLLSLAVTAFILGGCSLIPDYQTPEAPVAAQWPQGPAYSPTQSADVAAAEQGWRQFFHDPALQQLIQTSLVNNRDLRVAALNLDAYRAQYRIQRADLFPAVSATGSGSRQRVPANMSQTGESGITSQYSATLGVSAYELDLFGRVRSLTEQALETYLSSEQARRSTQIALVASVANAYYTWQADQALFKLTEETLKTYEESYNLTRRSNEVGVASALDVSQARTAVEGARVKYSQYQRLVAQDVNSLTVLLGTGIPADLAKPLELDADQLAEVPAGLPSDILQRRPDIQEAEHLLKAANANIGAARAAFFPSISLTANAGSLSPDMGHLFSGGQGTWLFQPQINLPIFNAGSLKASLDYSKIQKDINVAKYEKTIQTAFQEVSDGLAARKTFEEQLQAQRDLVQANQDYYRLAERRYRIGIDSNLTFLDAQRNLFSAQQALIGDRLSQLTSEVNLYKALGGGWYEQTGQANQQASVETPKG.

The first 17 residues, 1–17, serve as a signal peptide directing secretion; that stretch reads MTKSLLSLAVTAFILGG. A lipid anchor (N-palmitoyl cysteine) is attached at cysteine 18. Cysteine 18 is lipidated: S-diacylglycerol cysteine.

This sequence belongs to the outer membrane factor (OMF) (TC 1.B.17) family.

Its subcellular location is the cell outer membrane. Functionally, probable outer membrane component of the TtgABC efflux pump with unknown specificity. This is Probable efflux pump outer membrane protein TtgC (ttgC) from Pseudomonas putida (strain ATCC 47054 / DSM 6125 / CFBP 8728 / NCIMB 11950 / KT2440).